The chain runs to 421 residues: ATP-dependent RNA helicase RhlB (421 aa).

A Q motif motif is present at residues 9–37 (QKFSDFALHPAVIEALEKKGFHNCTPIQA). Positions 40–219 (LPLTLEGRDV…FEQMNNAEYV (180 aa)) constitute a Helicase ATP-binding domain. 53–60 (AQTGTGKT) contacts ATP. A DEAD box motif is present at residues 165 to 168 (DEAD). The Helicase C-terminal domain occupies 245-390 (RLLQTLLEEE…VSKYNPDALM (146 aa)). The segment at 396 to 421 (PLRLTRARPGNGPRRNGPPRNRRRSG) is disordered. A compositionally biased stretch (low complexity) spans 403–414 (RPGNGPRRNGPP).

It belongs to the DEAD box helicase family. RhlB subfamily. In terms of assembly, component of the RNA degradosome, which is a multiprotein complex involved in RNA processing and mRNA degradation.

It is found in the cytoplasm. The enzyme catalyses ATP + H2O = ADP + phosphate + H(+). Its function is as follows. DEAD-box RNA helicase involved in RNA degradation. Has RNA-dependent ATPase activity and unwinds double-stranded RNA. This chain is ATP-dependent RNA helicase RhlB, found in Klebsiella pneumoniae (strain 342).